Reading from the N-terminus, the 217-residue chain is Probable GTP-binding protein EngB (217 aa).

Residues 27-201 enclose the EngB-type G domain; that stretch reads TGIEVAFAGR…RDKLDTWFSE (175 aa). GTP contacts are provided by residues 35–42, 62–66, 80–83, 147–150, and 180–182; these read GRSNAGKS, GRTQL, DLPG, TKAD, and FSS. Residues S42 and T64 each coordinate Mg(2+).

Belongs to the TRAFAC class TrmE-Era-EngA-EngB-Septin-like GTPase superfamily. EngB GTPase family. It depends on Mg(2+) as a cofactor.

Necessary for normal cell division and for the maintenance of normal septation. The sequence is that of Probable GTP-binding protein EngB from Edwardsiella ictaluri (strain 93-146).